The primary structure comprises 85 residues: Large ribosomal subunit protein bL27 (85 aa).

The interval 1–22 (MAHKKAGGSTRNGRDSESKRLG) is disordered.

Belongs to the bacterial ribosomal protein bL27 family.

In Aliivibrio fischeri (strain ATCC 700601 / ES114) (Vibrio fischeri), this protein is Large ribosomal subunit protein bL27.